The primary structure comprises 342 residues: GTPase Obg (342 aa).

Residues 1 to 159 enclose the Obg domain; the sequence is MQFIDRAEIE…RHLRLELKLL (159 aa). In terms of domain architecture, OBG-type G spans 160–328; that stretch reads AEVGIIGLPN…LLAKVWQQLE (169 aa). GTP-binding positions include 166–173, 191–195, 213–216, 280–283, and 309–311; these read GLPNAGKS, FTTLI, DIPG, NKID, and SAV. The Mg(2+) site is built by Ser173 and Thr193.

This sequence belongs to the TRAFAC class OBG-HflX-like GTPase superfamily. OBG GTPase family. As to quaternary structure, monomer. Requires Mg(2+) as cofactor.

It localises to the cytoplasm. Its function is as follows. An essential GTPase which binds GTP, GDP and possibly (p)ppGpp with moderate affinity, with high nucleotide exchange rates and a fairly low GTP hydrolysis rate. Plays a role in control of the cell cycle, stress response, ribosome biogenesis and in those bacteria that undergo differentiation, in morphogenesis control. This is GTPase Obg from Microcystis aeruginosa (strain NIES-843 / IAM M-2473).